The following is a 565-amino-acid chain: Adenine deaminase (565 aa).

This sequence belongs to the metallo-dependent hydrolases superfamily. Adenine deaminase family. The cofactor is Mn(2+).

The enzyme catalyses adenine + H2O + H(+) = hypoxanthine + NH4(+). This chain is Adenine deaminase, found in Gluconobacter oxydans (strain 621H) (Gluconobacter suboxydans).